Here is a 430-residue protein sequence, read N- to C-terminus: Histidine--tRNA ligase (430 aa).

This sequence belongs to the class-II aminoacyl-tRNA synthetase family. In terms of assembly, homodimer.

Its subcellular location is the cytoplasm. It carries out the reaction tRNA(His) + L-histidine + ATP = L-histidyl-tRNA(His) + AMP + diphosphate + H(+). The protein is Histidine--tRNA ligase of Parasynechococcus marenigrum (strain WH8102).